Reading from the N-terminus, the 616-residue chain is Schwannomin-interacting protein 1 homolog (616 aa).

Residues 38–50 (ESDLTDSDREDDP) show a composition bias toward acidic residues. Disordered stretches follow at residues 38–71 (ESDL…GQDS), 204–251 (LKQT…PDTF), and 292–320 (SSLE…YSNQ). 2 stretches are compositionally biased toward polar residues: residues 62–71 (SETFKNGQDS) and 204–217 (LKQT…GNST). Positions 550–594 (LQLLVNNLQEYIENLNVTLLESLKERDDLNSDQDDILHDLEKINN) form a coiled coil.

The protein belongs to the SCHIP1 family. As to quaternary structure, interacts with ex; the interaction results in recruitment of Schip1 to the apical cell membrane. Interacts with Tao; the interaction enhances Tao kinase activity. Interacts with Mer. In terms of tissue distribution, in eye disks of the third instar larvae, expressed in all cells (at protein level).

The protein localises to the cell junction. The protein resides in the adherens junction. Its subcellular location is the apical cell membrane. Regulator of the Hippo/SWH (Sav/Wts/Hpo) signaling pathway, a signaling pathway that plays a pivotal role in organ size control and tumor suppression by restricting proliferation and promoting apoptosis. The core of this pathway is composed of a kinase cascade wherein Hippo (hpo), in complex with its regulatory protein Salvador (sav), phosphorylates and activates Warts (wts) in complex with its regulatory protein Mats, which in turn phosphorylates and inactivates the Yorkie (yki) oncoprotein. Schip1 promotes kinase activity of Tao and enhances phosphorylation of hpo by Tao. This Drosophila melanogaster (Fruit fly) protein is Schwannomin-interacting protein 1 homolog.